The following is an 822-amino-acid chain: Nucleolar complex protein 3 (822 aa).

Disordered regions lie at residues Met-1–Asp-86, Ala-106–Asp-142, and Lys-172–Asp-199. Basic residues predominate over residues Arg-13 to Pro-23. Residues Lys-35–Gln-45 show a composition bias toward basic and acidic residues. The Nuclear localization signal motif lies at Ser-41–Asn-48. Positions Pro-76–Asp-86 are enriched in acidic residues. The segment covering Thr-116–Ser-126 has biased composition (polar residues). Positions Glu-181–Asp-199 are enriched in acidic residues. Ser-187 bears the Phosphoserine mark. Position 193 is a phosphothreonine (Thr-193). Residue Ser-198 is modified to Phosphoserine. Positions Lys-445–Thr-509 form a coiled coil.

The protein belongs to the CBF/MAK21 family.

It localises to the nucleus. The protein localises to the nucleolus. This Drosophila melanogaster (Fruit fly) protein is Nucleolar complex protein 3.